The primary structure comprises 451 residues: Chromosomal replication initiator protein DnaA (451 aa).

The interval 1 to 77 (MTENEQIFWN…EVYNAQISVD (77 aa)) is domain I, interacts with DnaA modulators. Residues 77 to 110 (DYVFEEDLMIEQNQTKINQKPKQQALNSLPTVTS) are domain II. Residues 111–329 (DLNSKYSFEN…GALKDISLVA (219 aa)) form a domain III, AAA+ region region. The ATP site is built by G155, G157, K158, and T159. The domain IV, binds dsDNA stretch occupies residues 330 to 451 (NFKQIDTITV…EIETIKNKIK (122 aa)).

It belongs to the DnaA family. As to quaternary structure, oligomerizes as a right-handed, spiral filament on DNA at oriC.

Its subcellular location is the cytoplasm. Functionally, plays an essential role in the initiation and regulation of chromosomal replication. ATP-DnaA binds to the origin of replication (oriC) to initiate formation of the DNA replication initiation complex once per cell cycle. Binds the DnaA box (a 9 base pair repeat at the origin) and separates the double-stranded (ds)DNA. Forms a right-handed helical filament on oriC DNA; dsDNA binds to the exterior of the filament while single-stranded (ss)DNA is stabiized in the filament's interior. The ATP-DnaA-oriC complex binds and stabilizes one strand of the AT-rich DNA unwinding element (DUE), permitting loading of DNA polymerase. After initiation quickly degrades to an ADP-DnaA complex that is not apt for DNA replication. Binds acidic phospholipids. The half-life of ATP-DnaA is 12 minutes at 37 degrees Celsius, in E.coli the half-life is about 41 minutes. This Streptococcus pyogenes serotype M1 protein is Chromosomal replication initiator protein DnaA.